We begin with the raw amino-acid sequence, 352 residues long: UDP-N-acetylglucosamine--N-acetylmuramyl-(pentapeptide) pyrophosphoryl-undecaprenol N-acetylglucosamine transferase 3 (352 aa).

UDP-N-acetyl-alpha-D-glucosamine contacts are provided by residues Ser-11–Gly-13, Arg-164, Ser-194, and Gln-289.

The protein belongs to the glycosyltransferase 28 family. MurG subfamily.

The protein localises to the cell membrane. The enzyme catalyses di-trans,octa-cis-undecaprenyl diphospho-N-acetyl-alpha-D-muramoyl-L-alanyl-D-glutamyl-meso-2,6-diaminopimeloyl-D-alanyl-D-alanine + UDP-N-acetyl-alpha-D-glucosamine = di-trans,octa-cis-undecaprenyl diphospho-[N-acetyl-alpha-D-glucosaminyl-(1-&gt;4)]-N-acetyl-alpha-D-muramoyl-L-alanyl-D-glutamyl-meso-2,6-diaminopimeloyl-D-alanyl-D-alanine + UDP + H(+). Its pathway is cell wall biogenesis; peptidoglycan biosynthesis. Its function is as follows. Cell wall formation. Catalyzes the transfer of a GlcNAc subunit on undecaprenyl-pyrophosphoryl-MurNAc-pentapeptide (lipid intermediate I) to form undecaprenyl-pyrophosphoryl-MurNAc-(pentapeptide)GlcNAc (lipid intermediate II). The protein is UDP-N-acetylglucosamine--N-acetylmuramyl-(pentapeptide) pyrophosphoryl-undecaprenol N-acetylglucosamine transferase 3 of Bacillus thuringiensis (strain Al Hakam).